Here is a 174-residue protein sequence, read N- to C-terminus: MALNLMAKKAVVAQVNLLARVSVSIGVAEYCGLTVEQMTNLRSSAIDADVVLRVVKNSLAKRALVSTKCECVLPVLSGPVILGFSQQDLGAVARVFKNFIKENKDLVVKGLGVSGEFVESNQLKRIADLPTRDQAISIIMALMLAPVEKLARTLIEVPMKVTRVVEAVCDQKKS.

Belongs to the universal ribosomal protein uL10 family. Part of the ribosomal stalk of the 50S ribosomal subunit. The N-terminus interacts with L11 and the large rRNA to form the base of the stalk. The C-terminus forms an elongated spine to which L12 dimers bind in a sequential fashion forming a multimeric L10(L12)X complex.

Functionally, forms part of the ribosomal stalk, playing a central role in the interaction of the ribosome with GTP-bound translation factors. The polypeptide is Large ribosomal subunit protein uL10 (Vesicomyosocius okutanii subsp. Calyptogena okutanii (strain HA)).